The sequence spans 383 residues: Putative glutamate--cysteine ligase 2 (383 aa).

The protein belongs to the glutamate--cysteine ligase type 2 family. YbdK subfamily.

The enzyme catalyses L-cysteine + L-glutamate + ATP = gamma-L-glutamyl-L-cysteine + ADP + phosphate + H(+). Its function is as follows. ATP-dependent carboxylate-amine ligase which exhibits weak glutamate--cysteine ligase activity. The protein is Putative glutamate--cysteine ligase 2 of Clavibacter michiganensis subsp. michiganensis (strain NCPPB 382).